The chain runs to 253 residues: Shikimate dehydrogenase (253 aa).

The Proton acceptor role is filled by K63. NADP(+) is bound at residue 115 to 119 (GAGGA).

It belongs to the shikimate dehydrogenase family.

It catalyses the reaction shikimate + NADP(+) = 3-dehydroshikimate + NADPH + H(+). Its pathway is metabolic intermediate biosynthesis; chorismate biosynthesis; chorismate from D-erythrose 4-phosphate and phosphoenolpyruvate: step 4/7. This chain is Shikimate dehydrogenase (aroE), found in Thermotoga neapolitana (strain ATCC 49049 / DSM 4359 / NBRC 107923 / NS-E).